The following is a 163-amino-acid chain: Lipoprotein signal peptidase (163 aa).

4 helical membrane-spanning segments follow: residues 9–29, 42–62, 67–87, and 93–113; these read AWPW…SKYL, ILPF…SFLG, WQII…ILWL, and SEIM…GNFI. Catalysis depends on residues aspartate 123 and aspartate 141. A helical transmembrane segment spans residues 137–157; that stretch reads FNVADSAICVGVFLLIVHMLL.

This sequence belongs to the peptidase A8 family.

It localises to the cell inner membrane. The catalysed reaction is Release of signal peptides from bacterial membrane prolipoproteins. Hydrolyzes -Xaa-Yaa-Zaa-|-(S,diacylglyceryl)Cys-, in which Xaa is hydrophobic (preferably Leu), and Yaa (Ala or Ser) and Zaa (Gly or Ala) have small, neutral side chains.. It participates in protein modification; lipoprotein biosynthesis (signal peptide cleavage). This protein specifically catalyzes the removal of signal peptides from prolipoproteins. The protein is Lipoprotein signal peptidase of Coxiella burnetii (strain RSA 493 / Nine Mile phase I).